Here is a 1510-residue protein sequence, read N- to C-terminus: Cysteine-tryptophan domain-containing zinc finger protein 5 (1510 aa).

A compositionally biased stretch (polar residues) spans 174–196 (YCQRTSSENDSNHSQQLLNSGPE). Disordered stretches follow at residues 174–198 (YCQR…PEQK), 449–497 (SSLD…CAKD), 555–574 (KPNY…YVLD), and 582–616 (LHTE…DHKI). Over residues 454 to 465 (GFSHKTKSDKCN) the composition is skewed to basic and acidic residues. Over residues 467 to 476 (QPVTTSSQLQ) the composition is skewed to polar residues. Basic and acidic residues-rich tracts occupy residues 479–497 (PAKK…CAKD) and 556–574 (PNYD…YVLD). The CW-type zinc finger occupies 645 to 698 (SEPVDQWVCCDKCETWRLLPYGMNSDTLPKKWRCSMQSWLPGMNNCKLSEGETT). Zn(2+)-binding residues include C654, C657, C678, and C690. Residues 768 to 780 (KQKRIESSDKGEK) are compositionally biased toward basic and acidic residues. Disordered stretches follow at residues 768–893 (KQKR…RDLF), 1003–1050 (STAA…LDRH), and 1149–1194 (LPIH…VRPD). The span at 781-790 (STVTISSGQT) shows a compositional bias: polar residues. Residues 874–893 (NSDRGARASDAGKSDPRDLF) show a composition bias toward basic and acidic residues. The segment covering 1003–1016 (STAATSSSSKVSSS) has biased composition (low complexity). Polar residues-rich tracts occupy residues 1026 to 1040 (TRTS…SPLR) and 1162 to 1182 (PDQN…QAKL).

In terms of tissue distribution, highly expressed in young panicles. Expressed at low levels in leaf sheaths, nodes, internodes and axillary buds.

It is found in the nucleus. Functionally, binds to histones H3K4me1, H3K4me2 and H3K4me3 in GST pull-down assay. May facilitate the recruitment of effectors to mediate gene expression. This Oryza sativa subsp. japonica (Rice) protein is Cysteine-tryptophan domain-containing zinc finger protein 5.